The sequence spans 315 residues: Methionyl-tRNA formyltransferase (315 aa).

Residue 113–116 (SLLP) coordinates (6S)-5,6,7,8-tetrahydrofolate.

This sequence belongs to the Fmt family.

The enzyme catalyses L-methionyl-tRNA(fMet) + (6R)-10-formyltetrahydrofolate = N-formyl-L-methionyl-tRNA(fMet) + (6S)-5,6,7,8-tetrahydrofolate + H(+). Functionally, attaches a formyl group to the free amino group of methionyl-tRNA(fMet). The formyl group appears to play a dual role in the initiator identity of N-formylmethionyl-tRNA by promoting its recognition by IF2 and preventing the misappropriation of this tRNA by the elongation apparatus. The protein is Methionyl-tRNA formyltransferase of Escherichia coli O17:K52:H18 (strain UMN026 / ExPEC).